Reading from the N-terminus, the 102-residue chain is ATP-dependent Clp protease adapter protein ClpS (102 aa).

This sequence belongs to the ClpS family. As to quaternary structure, binds to the N-terminal domain of the chaperone ClpA.

Involved in the modulation of the specificity of the ClpAP-mediated ATP-dependent protein degradation. This chain is ATP-dependent Clp protease adapter protein ClpS, found in Shewanella frigidimarina (strain NCIMB 400).